A 269-amino-acid chain; its full sequence is MKI67 FHA domain-interacting nucleolar phosphoprotein (269 aa).

The RRM domain occupies 45–123; sequence GVLYVGHLPR…RIIKCHVIPP (79 aa). The disordered stretch occupies residues 234 to 269; sequence DEIVIKVKPLPENSDDVEESEEESAEEDEGEEEEAA. Residues 246-269 show a composition bias toward acidic residues; that stretch reads NSDDVEESEEESAEEDEGEEEEAA.

The protein localises to the nucleus. It localises to the nucleolus. Its function is as follows. Plays an essential role in early embryonic development. The protein is MKI67 FHA domain-interacting nucleolar phosphoprotein (nifk) of Danio rerio (Zebrafish).